A 254-amino-acid chain; its full sequence is 5'-nucleotidase SurE (254 aa).

A divalent metal cation is bound by residues D8, D9, S40, and N93.

It belongs to the SurE nucleotidase family. Requires a divalent metal cation as cofactor.

It localises to the cytoplasm. It catalyses the reaction a ribonucleoside 5'-phosphate + H2O = a ribonucleoside + phosphate. Functionally, nucleotidase that shows phosphatase activity on nucleoside 5'-monophosphates. The chain is 5'-nucleotidase SurE from Methylorubrum extorquens (strain CM4 / NCIMB 13688) (Methylobacterium extorquens).